The chain runs to 81 residues: Defensin-like protein 311 (81 aa).

The N-terminal stretch at 1–24 (MEKISAFFVILFLVSSCLVTMSVG) is a signal peptide. 3 disulfide bridges follow: cysteine 27-cysteine 50, cysteine 33-cysteine 57, and cysteine 41-cysteine 59.

The protein belongs to the DEFL family.

Its subcellular location is the secreted. The sequence is that of Defensin-like protein 311 from Arabidopsis thaliana (Mouse-ear cress).